The following is a 374-amino-acid chain: Growth/differentiation factor 8 (374 aa).

A signal peptide spans 1–22 (MHFTQVLISLSVLIACGPVGYG). Residues 23–265 (DITAHQQPST…ISEGPKRIRR (243 aa)) constitute a propeptide that is removed on maturation. N-linked (GlcNAc...) asparagine glycans are attached at residues N72 and N274. 4 disulfide bridges follow: C271/C281, C280/C339, C308/C371, and C312/C373.

This sequence belongs to the TGF-beta family. As to quaternary structure, homodimer; disulfide-linked. As to expression, predominantly expressed in muscle. At hatching, expression is strongest in the skin epithelium, and is also found in the retina and brain. From day 28, expressed in skeletal muscle. In the adult, highest expression is seen in the gastrointestinal tract, brain, muscle, heart and testis. Also expressed in the adult pharynx, kidney, spleen, liver, gill, eyes, skin, swim bladder and ovary.

The protein localises to the secreted. Acts specifically as a negative regulator of skeletal muscle growth. May down-regulate muscle-specific transcription factors such as myod and myog. In Danio rerio (Zebrafish), this protein is Growth/differentiation factor 8 (mstnb).